Reading from the N-terminus, the 160-residue chain is Cytochrome b6-f complex subunit 4 (160 aa).

3 consecutive transmembrane segments (helical) span residues 36-56, 95-115, and 131-151; these read LLYIFPVVILGTIACNVGLAV, LLGVLLMASVPAGLLTVPFLE, and TVFLVGTVVALWLGIGATLPI.

It belongs to the cytochrome b family. PetD subfamily. As to quaternary structure, the 4 large subunits of the cytochrome b6-f complex are cytochrome b6, subunit IV (17 kDa polypeptide, petD), cytochrome f and the Rieske protein, while the 4 small subunits are petG, petL, petM and petN. The complex functions as a dimer.

The protein localises to the plastid. It localises to the chloroplast thylakoid membrane. Functionally, component of the cytochrome b6-f complex, which mediates electron transfer between photosystem II (PSII) and photosystem I (PSI), cyclic electron flow around PSI, and state transitions. This is Cytochrome b6-f complex subunit 4 from Spinacia oleracea (Spinach).